The chain runs to 510 residues: NAD(P)H-quinone oxidoreductase subunit 2 B, chloroplastic (510 aa).

Transmembrane regions (helical) follow at residues 24–44 (LLLF…GLIL), 57–77 (IPWL…ALLF), 99–119 (IFQF…VEYI), 124–144 (MAIT…MFLC), 149–169 (LITI…LSGY), 183–203 (YLLM…WLYG), 227–247 (PGIS…LSPA), 295–315 (WHLL…LIAI), 323–343 (MLAY…IVGD), 354–374 (YMLF…LFGL), 395–415 (ALSL…AGFF), 418–438 (LYLF…IGLL), and 484–504 (MIVC…IIAI).

The protein belongs to the complex I subunit 2 family. As to quaternary structure, NDH is composed of at least 16 different subunits, 5 of which are encoded in the nucleus.

Its subcellular location is the plastid. The protein localises to the chloroplast thylakoid membrane. It catalyses the reaction a plastoquinone + NADH + (n+1) H(+)(in) = a plastoquinol + NAD(+) + n H(+)(out). The catalysed reaction is a plastoquinone + NADPH + (n+1) H(+)(in) = a plastoquinol + NADP(+) + n H(+)(out). Functionally, NDH shuttles electrons from NAD(P)H:plastoquinone, via FMN and iron-sulfur (Fe-S) centers, to quinones in the photosynthetic chain and possibly in a chloroplast respiratory chain. The immediate electron acceptor for the enzyme in this species is believed to be plastoquinone. Couples the redox reaction to proton translocation, and thus conserves the redox energy in a proton gradient. This chain is NAD(P)H-quinone oxidoreductase subunit 2 B, chloroplastic, found in Daucus carota (Wild carrot).